Here is a 344-residue protein sequence, read N- to C-terminus: N-acetyl-gamma-glutamyl-phosphate reductase (344 aa).

The active site involves C150.

It belongs to the NAGSA dehydrogenase family. Type 1 subfamily.

It localises to the cytoplasm. It carries out the reaction N-acetyl-L-glutamate 5-semialdehyde + phosphate + NADP(+) = N-acetyl-L-glutamyl 5-phosphate + NADPH + H(+). Its pathway is amino-acid biosynthesis; L-arginine biosynthesis; N(2)-acetyl-L-ornithine from L-glutamate: step 3/4. Its function is as follows. Catalyzes the NADPH-dependent reduction of N-acetyl-5-glutamyl phosphate to yield N-acetyl-L-glutamate 5-semialdehyde. The sequence is that of N-acetyl-gamma-glutamyl-phosphate reductase from Pseudomonas syringae pv. syringae (strain B728a).